A 391-amino-acid polypeptide reads, in one-letter code: Phosphoglycerate kinase (391 aa).

Residues 21–23, R36, 59–62, R114, and R147 contribute to the substrate site; these read DLN and HLGR. Residues K198, E315, and 344–347 contribute to the ATP site; that span reads GGDT.

Belongs to the phosphoglycerate kinase family. Monomer.

The protein localises to the cytoplasm. It carries out the reaction (2R)-3-phosphoglycerate + ATP = (2R)-3-phospho-glyceroyl phosphate + ADP. The protein operates within carbohydrate degradation; glycolysis; pyruvate from D-glyceraldehyde 3-phosphate: step 2/5. The chain is Phosphoglycerate kinase from Haemophilus ducreyi (strain 35000HP / ATCC 700724).